Here is a 352-residue protein sequence, read N- to C-terminus: Phosphoribosylformylglycinamidine cyclo-ligase (352 aa).

The protein belongs to the AIR synthase family.

The protein localises to the cytoplasm. It catalyses the reaction 2-formamido-N(1)-(5-O-phospho-beta-D-ribosyl)acetamidine + ATP = 5-amino-1-(5-phospho-beta-D-ribosyl)imidazole + ADP + phosphate + H(+). It functions in the pathway purine metabolism; IMP biosynthesis via de novo pathway; 5-amino-1-(5-phospho-D-ribosyl)imidazole from N(2)-formyl-N(1)-(5-phospho-D-ribosyl)glycinamide: step 2/2. This is Phosphoribosylformylglycinamidine cyclo-ligase from Pseudomonas entomophila (strain L48).